We begin with the raw amino-acid sequence, 152 residues long: Protein-export protein SecB (152 aa).

The protein belongs to the SecB family. As to quaternary structure, homotetramer, a dimer of dimers. One homotetramer interacts with 1 SecA dimer.

Its subcellular location is the cytoplasm. Functionally, one of the proteins required for the normal export of preproteins out of the cell cytoplasm. It is a molecular chaperone that binds to a subset of precursor proteins, maintaining them in a translocation-competent state. It also specifically binds to its receptor SecA. This Rickettsia africae (strain ESF-5) protein is Protein-export protein SecB.